The sequence spans 263 residues: Trem-like transcript 4 protein (263 aa).

The signal sequence occupies residues 1–28 (MAWRYSQLLLVPVQLVFLASVCCPGVWG). In terms of domain architecture, Ig-like V-type spans 29-132 (STVSEELHRM…LREVTVLRNI (104 aa)). Over 29–200 (STVSEELHRM…GWTSPGLLVS (172 aa)) the chain is Extracellular. Cysteines 47 and 116 form a disulfide. N-linked (GlcNAc...) asparagine glycosylation is present at asparagine 100. Residues 168–191 (SPEETTDSSINGTGHRNQSSSSPG) are disordered. A helical transmembrane segment spans residues 201–221 (VQYGLLLLKALMLSVFCVLLC). The Cytoplasmic portion of the chain corresponds to 222–263 (WRSGQGREYMAETMELSKLPHISKSLDTVSHISGYEKKANWY).

In terms of assembly, interacts with TYROBP/DAP12. In terms of tissue distribution, predominantly expressed in spleen, with highest levels on selected populations of macrophages, including red pulp macrophages, and on subsets of dendritic cells (DC), mostly on CD8alpha(+) DC (at protein level). Also expressed on blood and spleen Ly6C(low) monocytes (at protein level). Not expressed on lymphocytes or granulocytes (at protein level).

It is found in the cell membrane. In terms of biological role, positively regulates Toll-like receptor signaling via TLR7, TLR9 and TLR13 in neutrophils and splenic macrophages. Regulates TLR7 signaling by controlling ligand-induced recruitment of TLR7 from the endoplasmic reticulum to endosomes and lysosomes. Positively regulates Toll-like receptor TLR9-induced production of inflammatory cytokines but is dispensable for IFNB1 production. Involved in the anti-viral response to several viruses including influenza virus, vesicular stomatitis virus and cytomegalovirus. Binds to late apoptotic, and necrotic cells, but not living or early apoptotic cells, but is not essential for uptake of dying cells by dendritic cells (DCs). Does not bind nucleic acids. May participate in antigen presentation. This is Trem-like transcript 4 protein (Treml4) from Mus musculus (Mouse).